We begin with the raw amino-acid sequence, 403 residues long: Chromatin structure-remodeling complex subunit rsc58 (403 aa).

Residues 376-389 (SLSMNGSLSPSSTN) show a composition bias toward low complexity. Residues 376–403 (SLSMNGSLSPSSTNVPLQSYRRTTKSRR) are disordered. Residue serine 384 is modified to Phosphoserine.

As to quaternary structure, component of the RSC complex composed of at least arp9, arp42, rsc1, rsc4, rsc7, rsc9, rsc58, sfh1, snf21, ssr1, ssr2, ssr3 and ssr4. The complex interacts with histone and histone variant components of centromeric chromatin.

The protein localises to the cytoplasm. It localises to the nucleus. Functionally, component of the chromatin structure remodeling complex (RSC), which is involved in transcription regulation and nucleosome positioning. Controls particularly membrane and organelle development genes. The chain is Chromatin structure-remodeling complex subunit rsc58 (rsc58) from Schizosaccharomyces pombe (strain 972 / ATCC 24843) (Fission yeast).